The primary structure comprises 307 residues: uncharacterized protein (307 aa).

This is an uncharacterized protein from Acidianus hospitalis (AFV-1).